Here is a 361-residue protein sequence, read N- to C-terminus: Ribosomal RNA large subunit methyltransferase M (361 aa).

S-adenosyl-L-methionine-binding positions include Ser-187, 220–223 (CPGG), Asp-239, Asp-259, and Asp-276. Lys-305 serves as the catalytic Proton acceptor.

Belongs to the class I-like SAM-binding methyltransferase superfamily. RNA methyltransferase RlmE family. RlmM subfamily. Monomer.

Its subcellular location is the cytoplasm. The catalysed reaction is cytidine(2498) in 23S rRNA + S-adenosyl-L-methionine = 2'-O-methylcytidine(2498) in 23S rRNA + S-adenosyl-L-homocysteine + H(+). In terms of biological role, catalyzes the 2'-O-methylation at nucleotide C2498 in 23S rRNA. In Shewanella sp. (strain W3-18-1), this protein is Ribosomal RNA large subunit methyltransferase M.